Consider the following 288-residue polypeptide: ATP synthase gamma chain (288 aa).

It belongs to the ATPase gamma chain family. In terms of assembly, F-type ATPases have 2 components, CF(1) - the catalytic core - and CF(0) - the membrane proton channel. CF(1) has five subunits: alpha(3), beta(3), gamma(1), delta(1), epsilon(1). CF(0) has three main subunits: a, b and c.

It localises to the cell inner membrane. Functionally, produces ATP from ADP in the presence of a proton gradient across the membrane. The gamma chain is believed to be important in regulating ATPase activity and the flow of protons through the CF(0) complex. This is ATP synthase gamma chain from Legionella pneumophila (strain Paris).